Reading from the N-terminus, the 276-residue chain is NADPH-dependent 7-cyano-7-deazaguanine reductase (276 aa).

Residue 80–82 (VES) participates in substrate binding. NADPH is bound at residue 82-83 (SK). Catalysis depends on Cys-183, which acts as the Thioimide intermediate. Asp-190 acts as the Proton donor in catalysis. Residue 222 to 223 (HE) coordinates substrate. 251-252 (RG) contributes to the NADPH binding site.

It belongs to the GTP cyclohydrolase I family. QueF type 2 subfamily. Homodimer.

It localises to the cytoplasm. It carries out the reaction 7-aminomethyl-7-carbaguanine + 2 NADP(+) = 7-cyano-7-deazaguanine + 2 NADPH + 3 H(+). It functions in the pathway tRNA modification; tRNA-queuosine biosynthesis. Functionally, catalyzes the NADPH-dependent reduction of 7-cyano-7-deazaguanine (preQ0) to 7-aminomethyl-7-deazaguanine (preQ1). The chain is NADPH-dependent 7-cyano-7-deazaguanine reductase from Burkholderia cenocepacia (strain HI2424).